Reading from the N-terminus, the 446-residue chain is Phosphoglucosamine mutase (446 aa).

Ser-100 acts as the Phosphoserine intermediate in catalysis. Residues Ser-100, Asp-239, Asp-241, and Asp-243 each contribute to the Mg(2+) site. Ser-100 is subject to Phosphoserine.

The protein belongs to the phosphohexose mutase family. Mg(2+) serves as cofactor. Activated by phosphorylation.

The enzyme catalyses alpha-D-glucosamine 1-phosphate = D-glucosamine 6-phosphate. In terms of biological role, catalyzes the conversion of glucosamine-6-phosphate to glucosamine-1-phosphate. The protein is Phosphoglucosamine mutase of Shouchella clausii (strain KSM-K16) (Alkalihalobacillus clausii).